We begin with the raw amino-acid sequence, 460 residues long: MGDWAKKSEDQEVSKLVDKLNLDSKSGEETDFDVADPAETSLLIKILGKGLVNTKLSLDLQQKNPNSPLHSVKTFEALHLKASLLKGIYAMGFNTPSKIQETALPTLLADPPQNMIAQSQSGTGKTAAFVLAMLSRVNVCLNHPQVLCLSPTYELAIQTGEVAARMGQFCREIKLRFAVRGEEVDRSKKIEEHILIGTPGKLLDWGIKFRLFDMKKISVFVLDEADVMIATQGHHDQCIRIHKMLNPHCQMLFFSATYGKEVMDFARLIVADPTIIRLMREEESLENIKQYYVKCKNEEGKYNAIQNIYGCISVGQAIIFCHTKRTAAWLAAKMTSDGHSVAVLTGDLTVVQRLDVLDRFRSGLEKVLITTNILSRGIDIEQLQVVVNFDLPVDLDGMADCETYLHRIGRTGRFGKSGIAINLITDEKTMKVCSDIEKHFNKKIEVLNTDSADDIEKIGT.

S26 is modified (phosphoserine). Position 30 is a phosphothreonine (T30). The short motif at 73–101 (KTFEALHLKASLLKGIYAMGFNTPSKIQE) is the Q motif element. Residues 106–276 (TLLADPPQNM…RLIVADPTII (171 aa)) form the Helicase ATP-binding domain. Residue 119–126 (SQSGTGKT) coordinates ATP. The DEAD box motif lies at 223-226 (DEAD). Residues 287–455 (NIKQYYVKCK…VLNTDSADDI (169 aa)) form the Helicase C-terminal domain.

It belongs to the DEAD box helicase family. DDX19/DBP5 subfamily.

The protein localises to the cytoplasm. The protein resides in the nucleus. It is found in the nucleoplasm. The catalysed reaction is ATP + H2O = ADP + phosphate + H(+). ATP-dependent RNA helicase involved in mRNA export from the nucleus. The protein is DEAD-box helicase Dbp80 (Dbp80) of Drosophila melanogaster (Fruit fly).